A 727-amino-acid polypeptide reads, in one-letter code: Platelet endothelial cell adhesion molecule (727 aa).

The N-terminal stretch at 1–17 is a signal peptide; sequence MLLALGLTLVLYASLQA. Residues 18-590 are Extracellular-facing; that stretch reads EENSFTINSI…VRVFLAPWKK (573 aa). Ig-like C2-type domains are found at residues 40-126, 135-213, 225-309, 315-391, 413-472, and 488-578; these read GQQL…PKVT, GGVV…PIRS, PKFE…IMVN, PKPK…LVPI, GHAI…NCHS, and PVDE…RSST. A disulfide bond links C47 and C99. Residues N74 and N141 are each glycosylated (N-linked (GlcNAc...) asparagine). 2 disulfide bridges follow: C142–C195 and C245–C293. Residues N309, N345, N360, N424, and N540 are each glycosylated (N-linked (GlcNAc...) asparagine). 3 cysteine pairs are disulfide-bonded: C336-C375, C420-C465, and C512-C561. A helical transmembrane segment spans residues 591 to 609; that stretch reads GLIAVVVIGVVIATLIVAA. Over 610 to 727 the chain is Cytoplasmic; that stretch reads KCYFLRKAKA…SRTEGSLNGT (118 aa). C611 carries S-palmitoyl cysteine lipidation. The interval 642–672 is disordered; the sequence is SEPSVEANSHYGYDDVSGNDAVKPINQNKDP. 2 consecutive short sequence motifs (ITIM motif) follow at residues 677–682 and 700–705; these read VEYTEV and TVYSEI. Residues Y679 and Y702 each carry the phosphotyrosine; by FER modification. The segment at 698–718 is membrane-bound segment which detaches upon phosphorylation; sequence TETVYSEIRKVDPNLMENRYS. The interval 710–727 is may play a role in cytoprotective signaling; it reads PNLMENRYSRTEGSLNGT. Residues S718 and S723 each carry the phosphoserine modification.

Trans-homodimer (via Ig-like C2-type 1 and Ig-like C2-type 2 domains); trans-homodimerization is required for cell-cell interaction. Forms a complex with BDKRB2 and GNAQ. Interacts with BDKRB2 and GNAQ. Interacts with PTPN11; Tyr-702 is critical for PTPN11 recruitment. Interacts with FER. Interacts with CD177; the interaction is Ca(2+)-dependent; the interaction is direct. Phosphorylated on Ser and Tyr residues by src kinases after cellular activation. Upon activation, phosphorylated on Ser-718 which probably initiates the dissociation of the membrane-interaction segment (residues 698-718) from the cell membrane allowing the sequential phosphorylation of Tyr-702 and Tyr-679. Constitutively phosphorylated on Ser-723 in resting platelets. Phosphorylated on tyrosine residues by FER and FES in response to FCER1 activation. In endothelial cells Fyn mediates mechanical-force (stretch or pull) induced tyrosine phosphorylation. In terms of processing, palmitoylation by ZDHHC21 is necessary for cell surface expression in endothelial cells and enrichment in membrane rafts. Expressed in lung and platelets (at protein level).

The protein localises to the cell membrane. It localises to the membrane raft. It is found in the cell junction. Cell adhesion molecule which is required for leukocyte transendothelial migration (TEM) under most inflammatory conditions. Tyr-679 plays a critical role in TEM and is required for efficient trafficking of PECAM1 to and from the lateral border recycling compartment (LBRC) and is also essential for the LBRC membrane to be targeted around migrating leukocytes. Trans-homophilic interaction may play a role in endothelial cell-cell adhesion via cell junctions. Heterophilic interaction with CD177 plays a role in transendothelial migration of neutrophils. Homophilic ligation of PECAM1 prevents macrophage-mediated phagocytosis of neighboring viable leukocytes by transmitting a detachment signal. Promotes macrophage-mediated phagocytosis of apoptotic leukocytes by tethering them to the phagocytic cells; PECAM1-mediated detachment signal appears to be disabled in apoptotic leukocytes. Modulates bradykinin receptor BDKRB2 activation. Regulates bradykinin- and hyperosmotic shock-induced ERK1/2 activation in endothelial cells. Induces susceptibility to atherosclerosis. The chain is Platelet endothelial cell adhesion molecule (Pecam1) from Mus musculus (Mouse).